We begin with the raw amino-acid sequence, 404 residues long: Caspase b (404 aa).

Positions 1–171 (MEDITQLLSD…DIYTPRSGTQ (171 aa)) are excised as a propeptide. Residues 8–80 (LSDVLEDLVE…LRKIKQNERA (73 aa)) form the Pyrin domain. Active-site residues include histidine 249 and cysteine 296. Residues 301 to 316 (SSGVLAQDSVFASDSW) constitute a propeptide that is removed on maturation.

It belongs to the peptidase C14A family. As to quaternary structure, upon direct LPS-binding, forms large homooligomers, resulting in its activation. These oligomers are often referred to as 'non-canonical inflammasomes'. Heterotetramer that consists of two anti-parallel arranged heterodimers, each one formed by a 20 kDa (p20) and a 10 kDa (p10) subunit. Interacts with caspa. Interacts with pycard; the interaction only occurs in the presence of nlrp1. Component of NLRP1 inflammasomes. Inflammasomes are supramolecular complexes that assemble in the cytosol in response to pathogens and other damage-associated signals and play critical roles in innate immunity and inflammation. The NLRP1 inflammasome is composed of the signal sensor nlrp1, and the adapter pycard (asc), which recruit effector pro-inflammatory caspases caspa and/or caspb. The interaction between nlrp1 and pycard is required for the sequential recruitment of caspa and then caspb. Caspa is preferentially recruited first and this causes the cleavage of pro-il1b into the midformed il1b. This is followed by the recruitment of caspb, which is activated and cleaves the midformed il1b resulting in il1b maturation. In terms of processing, the two subunits are derived from the precursor sequence by an autocatalytic mechanism. In terms of tissue distribution, expressed in the spleen, kidney and liver, and highly expressed in the gills and gut.

The protein localises to the inflammasome. Its subcellular location is the cytoplasm. The catalysed reaction is Strict requirement for Asp at the P1 position. It has a preferred cleavage sequence of Tyr-Val-Ala-Asp-|- but also cleaves at Asp-Glu-Val-Asp-|-.. With respect to regulation, activated by homooligomerization induced by direct binding to cytosolic LPS. Thiol protease which cleaves IL-1 beta (il1b), releasing the mature cytokine which is involved in a variety of inflammatory processes, and mediates apoptosis. Component of the NLRP1 inflammasome, which plays a crucial role in innate immunity and inflammation. In response to pathogens and other damage-associated signals, recruited to the NLRP1 inflammasome in its precursor form following the recruitment of caspase caspa. Its subsequent activation causes the cleavage of the midformed pro-il1b and results in il1b maturation and secretion in the extracellular milieu. Activated by direct binding to bacterial lipopolysaccharides (LPS), which causes non-canonical inflammasome activation and results in the pyroptosis of infected cells and their extrusion into the gut lumen, as well as in cytokine secretion. Plays a crucial role in the restriction of bacterial infection to intestinal sites. Pyroptosis limits bacterial replication, while cytokine secretion promotes the recruitment and activation of immune cells and triggers mucosal inflammation. Promotes pyroptosis by bacterial infection by E.piscicida. This Danio rerio (Zebrafish) protein is Caspase b.